Consider the following 295-residue polypeptide: Dehydrodolichyl diphosphate synthase 6 (295 aa).

It belongs to the UPP synthase family. Requires Mg(2+) as cofactor.

Its pathway is protein modification; protein glycosylation. In terms of biological role, catalyzes cis-prenyl chain elongation to produce the polyprenyl backbone of dolichol, a glycosyl carrier-lipid required for the biosynthesis of several classes of glycoprotein. In Arabidopsis thaliana (Mouse-ear cress), this protein is Dehydrodolichyl diphosphate synthase 6.